A 107-amino-acid chain; its full sequence is Ribonuclease P protein component 4 (107 aa).

Cys62, Cys65, Cys87, and Cys90 together coordinate Zn(2+).

The protein belongs to the eukaryotic/archaeal RNase P protein component 4 family. Consists of a catalytic RNA component and at least 4-5 protein subunits. Zn(2+) is required as a cofactor.

It localises to the cytoplasm. It carries out the reaction Endonucleolytic cleavage of RNA, removing 5'-extranucleotides from tRNA precursor.. Functionally, part of ribonuclease P, a protein complex that generates mature tRNA molecules by cleaving their 5'-ends. The polypeptide is Ribonuclease P protein component 4 (Archaeoglobus fulgidus (strain ATCC 49558 / DSM 4304 / JCM 9628 / NBRC 100126 / VC-16)).